The chain runs to 639 residues: Polyvinylalcohol dehydrogenase (639 aa).

Residues 1 to 33 form the signal peptide; the sequence is MQQNIERNQVSMTTSRFVWGAVMALVALGSASA. The region spanning 36–152 is the Cytochrome c domain; the sequence is LNLPDGAALY…TPDQWNGWGA (117 aa). Positions 49, 52, and 53 each coordinate heme.

This sequence belongs to the bacterial PQQ dehydrogenase family. As to quaternary structure, monomer. The cofactor is pyrroloquinoline quinone.

It localises to the cytoplasm. It carries out the reaction a polyvinyl alcohol + 2n Fe(III)-[cytochrome c] = an oxidized polyvinyl alcohol + 2n Fe(II)-[cytochrome c] + 2n H(+). In terms of biological role, catalyzes the oxidation of polyvinyl alcohol (PVA) in the polyvinyl alcohol degradation pathway. The protein is Polyvinylalcohol dehydrogenase (pvaA) of Pseudomonas sp.